Consider the following 209-residue polypeptide: Large ribosomal subunit protein uL3 (209 aa).

Residues 144-165 are disordered; it reads GSMGAASDPSRTFKNKKMPGHM.

Belongs to the universal ribosomal protein uL3 family. In terms of assembly, part of the 50S ribosomal subunit. Forms a cluster with proteins L14 and L19.

In terms of biological role, one of the primary rRNA binding proteins, it binds directly near the 3'-end of the 23S rRNA, where it nucleates assembly of the 50S subunit. This Clostridium novyi (strain NT) protein is Large ribosomal subunit protein uL3.